A 24-amino-acid polypeptide reads, in one-letter code: Coenzyme PQQ synthesis protein A (24 aa).

The segment at residues 16–20 (EITMY) is a cross-link (pyrroloquinoline quinone (Glu-Tyr)).

The protein belongs to the PqqA family.

It participates in cofactor biosynthesis; pyrroloquinoline quinone biosynthesis. Functionally, required for coenzyme pyrroloquinoline quinone (PQQ) biosynthesis. PQQ is probably formed by cross-linking a specific glutamate to a specific tyrosine residue and excising these residues from the peptide. The sequence is that of Coenzyme PQQ synthesis protein A from Burkholderia cenocepacia (strain ATCC BAA-245 / DSM 16553 / LMG 16656 / NCTC 13227 / J2315 / CF5610) (Burkholderia cepacia (strain J2315)).